The following is a 569-amino-acid chain: Sulfite reductase [NADPH] hemoprotein beta-component (569 aa).

Residues cysteine 433, cysteine 439, cysteine 478, and cysteine 482 each coordinate [4Fe-4S] cluster. Cysteine 482 serves as a coordination point for siroheme.

It belongs to the nitrite and sulfite reductase 4Fe-4S domain family. Alpha(8)-beta(8). The alpha component is a flavoprotein, the beta component is a hemoprotein. Siroheme is required as a cofactor. [4Fe-4S] cluster serves as cofactor.

It catalyses the reaction hydrogen sulfide + 3 NADP(+) + 3 H2O = sulfite + 3 NADPH + 4 H(+). Its pathway is sulfur metabolism; hydrogen sulfide biosynthesis; hydrogen sulfide from sulfite (NADPH route): step 1/1. Functionally, component of the sulfite reductase complex that catalyzes the 6-electron reduction of sulfite to sulfide. This is one of several activities required for the biosynthesis of L-cysteine from sulfate. The polypeptide is Sulfite reductase [NADPH] hemoprotein beta-component (Shewanella sediminis (strain HAW-EB3)).